The chain runs to 368 residues: UPF0284 protein Tery_1555 (368 aa).

Belongs to the UPF0284 family.

The sequence is that of UPF0284 protein Tery_1555 from Trichodesmium erythraeum (strain IMS101).